A 308-amino-acid polypeptide reads, in one-letter code: MAKRHVIFVVGSTATGKSEWALKLAQEFNGVIVNCDSVQLYKKLDIGSAKPSKAEQALVPHYLLDYVNPPEEMTAGNYCRDFYAILEEIPADKPVFVVGGTGFYFMAIEKGMYPVIPVPVEIQAQVALELETEEGAIRLHAEMMKADPEYGAKIHLADRYRIGRAIELIRSQGKSVTQIQAEFESQRKPFPFPLLKIGPSWDREVLRERIGQRVEKMLAAGLIEEVQGLLDEGLASWAPISSVGYKETLEYLRGGISLSQLQEEITTNTHQLAKRQRTWFQRDKDIQWFDGASGFAEVRTVVEKFLKP.

Residue 11–18 (GSTATGKS) participates in ATP binding. Residue 13–18 (TATGKS) participates in substrate binding. The interaction with substrate tRNA stretch occupies residues 36-39 (DSVQ).

Belongs to the IPP transferase family. As to quaternary structure, monomer. It depends on Mg(2+) as a cofactor.

The catalysed reaction is adenosine(37) in tRNA + dimethylallyl diphosphate = N(6)-dimethylallyladenosine(37) in tRNA + diphosphate. In terms of biological role, catalyzes the transfer of a dimethylallyl group onto the adenine at position 37 in tRNAs that read codons beginning with uridine, leading to the formation of N6-(dimethylallyl)adenosine (i(6)A). The polypeptide is tRNA dimethylallyltransferase (Bdellovibrio bacteriovorus (strain ATCC 15356 / DSM 50701 / NCIMB 9529 / HD100)).